Reading from the N-terminus, the 457-residue chain is Probable cytosolic Fe-S cluster assembly factor oxy-4 (457 aa).

Cys-25 serves as a coordination point for [4Fe-4S] cluster. Positions 38–59 (KEESQVNIRTKKPKDKESSKTE) are disordered. The [4Fe-4S] cluster site is built by Cys-71, Cys-74, Cys-77, Cys-176, Cys-232, Cys-380, and Cys-384.

This sequence belongs to the NARF family.

In terms of biological role, component of the cytosolic iron-sulfur (Fe/S) protein assembly machinery. Required for maturation of extramitochondrial Fe/S proteins. This Caenorhabditis elegans protein is Probable cytosolic Fe-S cluster assembly factor oxy-4 (oxy-4).